The sequence spans 305 residues: tRNA dimethylallyltransferase (305 aa).

8–15 is an ATP binding site; sequence GPTGTGKS. Residue 10 to 15 participates in substrate binding; the sequence is TGTGKS.

The protein belongs to the IPP transferase family. In terms of assembly, monomer. Requires Mg(2+) as cofactor.

The enzyme catalyses adenosine(37) in tRNA + dimethylallyl diphosphate = N(6)-dimethylallyladenosine(37) in tRNA + diphosphate. Its function is as follows. Catalyzes the transfer of a dimethylallyl group onto the adenine at position 37 in tRNAs that read codons beginning with uridine, leading to the formation of N6-(dimethylallyl)adenosine (i(6)A). The chain is tRNA dimethylallyltransferase from Mycobacterium sp. (strain KMS).